Consider the following 159-residue polypeptide: uncharacterized protein (159 aa).

The region spanning 6 to 66 (LSKKDWEIIK…YLRFDKLGYT (61 aa)) is the HTH asnC-type domain. The H-T-H motif DNA-binding region spans 25-44 (DAEIGRRIGLSKSAVRWRRI).

This is an uncharacterized protein from Pyrococcus horikoshii (strain ATCC 700860 / DSM 12428 / JCM 9974 / NBRC 100139 / OT-3).